The primary structure comprises 191 residues: Cell division protein SepF (191 aa).

Positions 153–178 (FPEEVSPSNISSKKTSPYSLETNTTP) are enriched in polar residues. A disordered region spans residues 153 to 191 (FPEEVSPSNISSKKTSPYSLETNTTPEPAWGESKLSAFS).

Belongs to the SepF family. As to quaternary structure, homodimer. Interacts with FtsZ.

The protein resides in the cytoplasm. In terms of biological role, cell division protein that is part of the divisome complex and is recruited early to the Z-ring. Probably stimulates Z-ring formation, perhaps through the cross-linking of FtsZ protofilaments. Its function overlaps with FtsA. This Prochlorococcus marinus (strain MIT 9515) protein is Cell division protein SepF.